A 380-amino-acid chain; its full sequence is Outer membrane protein 40 (380 aa).

An N-terminal signal peptide occupies residues 1-21 (MKAKSLLLALAGLACTFSATA). Gln-22 bears the Pyrrolidone carboxylic acid mark. The OmpA-like domain occupies 270-380 (PTVTRVVVDN…NRIVVMTAAE (111 aa)).

Belongs to the outer membrane OOP (TC 1.B.6) superfamily. In terms of assembly, disulfide-linked heterodimer with Omp41.

It localises to the cell outer membrane. Its function is as follows. May have porin activity and function in peptidoglycan binding. This chain is Outer membrane protein 40, found in Porphyromonas gingivalis (strain ATCC BAA-308 / W83).